We begin with the raw amino-acid sequence, 513 residues long: Glutamate--tRNA ligase 2 (513 aa).

The 'HIGH' region signature appears at 11–21 (PSPTGFLHIGS). The 'KMSKS' region signature appears at 240–244 (KLSKR). Lys243 contributes to the ATP binding site.

The protein belongs to the class-I aminoacyl-tRNA synthetase family. Glutamate--tRNA ligase type 1 subfamily. In terms of assembly, monomer.

Its subcellular location is the cytoplasm. It carries out the reaction tRNA(Glu) + L-glutamate + ATP = L-glutamyl-tRNA(Glu) + AMP + diphosphate. In terms of biological role, catalyzes the attachment of glutamate to tRNA(Glu) in a two-step reaction: glutamate is first activated by ATP to form Glu-AMP and then transferred to the acceptor end of tRNA(Glu). The chain is Glutamate--tRNA ligase 2 from Rickettsia rickettsii (strain Iowa).